A 193-amino-acid polypeptide reads, in one-letter code: 3-isopropylmalate dehydratase small subunit (193 aa).

The protein belongs to the LeuD family. LeuD type 1 subfamily. As to quaternary structure, heterodimer of LeuC and LeuD.

It carries out the reaction (2R,3S)-3-isopropylmalate = (2S)-2-isopropylmalate. It participates in amino-acid biosynthesis; L-leucine biosynthesis; L-leucine from 3-methyl-2-oxobutanoate: step 2/4. Its function is as follows. Catalyzes the isomerization between 2-isopropylmalate and 3-isopropylmalate, via the formation of 2-isopropylmaleate. The polypeptide is 3-isopropylmalate dehydratase small subunit (Bacillus thuringiensis subsp. konkukian (strain 97-27)).